Here is a 132-residue protein sequence, read N- to C-terminus: Probable histone H2A.1 (132 aa).

The interval 1–22 (MAGRGKTLGSGSAKKATTRSSK) is disordered.

The protein belongs to the histone H2A family. The nucleosome is a histone octamer containing two molecules each of H2A, H2B, H3 and H4 assembled in one H3-H4 heterotetramer and two H2A-H2B heterodimers. The octamer wraps approximately 147 bp of DNA. Not ubiquitinated. In terms of tissue distribution, low level of expression; mainly in roots. Found in the root cap cells and in non dividing tissues of the plant, including the root elongation and maturation zones and the leaf veins.

It localises to the nucleus. The protein resides in the chromosome. Its function is as follows. Core component of nucleosome. Nucleosomes wrap and compact DNA into chromatin, limiting DNA accessibility to the cellular machineries which require DNA as a template. Histones thereby play a central role in transcription regulation, DNA repair, DNA replication and chromosomal stability. DNA accessibility is regulated via a complex set of post-translational modifications of histones, also called histone code, and nucleosome remodeling. The sequence is that of Probable histone H2A.1 from Arabidopsis thaliana (Mouse-ear cress).